A 302-amino-acid polypeptide reads, in one-letter code: Transmembrane protein 191C (302 aa).

Disordered regions lie at residues 1-21 (MAAT…GRQR) and 54-73 (LRRR…EAAR). Residues 5-160 (QELLLQLQKD…EKLQQDALQT (156 aa)) are a coiled coil. A helical membrane pass occupies residues 238-258 (VLGALQVLLTLPLLFLGLSLL).

Belongs to the TMEM191 family.

It is found in the membrane. This chain is Transmembrane protein 191C, found in Homo sapiens (Human).